The primary structure comprises 313 residues: Cobalamin biosynthesis protein CobD (313 aa).

5 helical membrane passes run 52 to 72, 79 to 99, 154 to 174, 204 to 224, and 289 to 309; these read VAGAVHVGLLVGAVGLLGAAL, CWPVAATATATWAALGGTSLA, VVPLLWAASSGVPAVLGYRAI, YVGARATAVLVVICAPVVGGS, and AVVLSRVVQAGAAVLAVMLVY.

This sequence belongs to the CobD/CbiB family.

Its subcellular location is the cell membrane. It participates in cofactor biosynthesis; adenosylcobalamin biosynthesis. Its function is as follows. Converts cobyric acid to cobinamide by the addition of aminopropanol on the F carboxylic group. This Mycobacterium bovis (strain ATCC BAA-935 / AF2122/97) protein is Cobalamin biosynthesis protein CobD.